We begin with the raw amino-acid sequence, 422 residues long: Trichothecene biosynthesis transcription regulator TRI10 (422 aa).

Belongs to the TRI10 transcription regulator family.

It localises to the nucleus. Functionally, transcriptional activator of all of the trichothecene biosynthesis genes. Acts upstream of the cluster-encoded transcription factor TRI6 and is necessary for full expression of both the other trichothecene genes and the genes for the primary metabolic pathway that precedes the trichothecene biosynthetic pathway. This chain is Trichothecene biosynthesis transcription regulator TRI10, found in Trichoderma arundinaceum.